A 159-amino-acid polypeptide reads, in one-letter code: Cytochrome b6-f complex subunit 4 (159 aa).

The next 3 membrane-spanning stretches (helical) occupy residues 35–55 (ILIF…LAVL), 93–113 (LLGV…PFIE), and 127–147 (ATAV…GAMI).

The protein belongs to the cytochrome b family. PetD subfamily. In terms of assembly, the 4 large subunits of the cytochrome b6-f complex are cytochrome b6, subunit IV (17 kDa polypeptide, PetD), cytochrome f and the Rieske protein, while the 4 small subunits are PetG, PetL, PetM and PetN. The complex functions as a dimer.

The protein localises to the cell inner membrane. Component of the cytochrome b6-f complex, which mediates electron transfer between photosystem II (PSII) and photosystem I (PSI), cyclic electron flow around PSI, and state transitions. In Gloeobacter violaceus (strain ATCC 29082 / PCC 7421), this protein is Cytochrome b6-f complex subunit 4.